Here is a 525-residue protein sequence, read N- to C-terminus: Probable alpha-galactosidase A (525 aa).

An N-terminal signal peptide occupies residues 1-17; sequence MHPSMTLLAILPPLVRA. Cys-40 and Cys-72 are joined by a disulfide. N-linked (GlcNAc...) asparagine glycans are attached at residues Asn-43, Asn-81, and Asn-117. A disulfide bridge connects residues Cys-120 and Cys-150. The Nucleophile role is filled by Asp-148. Asn-197 carries N-linked (GlcNAc...) asparagine glycosylation. The active-site Proton donor is Asp-206. Residues 402-525 form the Ricin B-type lectin domain; sequence PPDCPMVIPT…GLPSGVDIEA (124 aa). Cystine bridges form between Cys-422–Cys-434 and Cys-459–Cys-472.

This sequence belongs to the glycosyl hydrolase 27 family.

It is found in the secreted. It catalyses the reaction Hydrolysis of terminal, non-reducing alpha-D-galactose residues in alpha-D-galactosides, including galactose oligosaccharides, galactomannans and galactolipids.. Functionally, hydrolyzes a variety of simple alpha-D-galactoside as well as more complex molecules such as oligosaccharides and polysaccharides. This is Probable alpha-galactosidase A (aglA) from Aspergillus clavatus (strain ATCC 1007 / CBS 513.65 / DSM 816 / NCTC 3887 / NRRL 1 / QM 1276 / 107).